The chain runs to 132 residues: Small ribosomal subunit protein uS8 (132 aa).

The protein belongs to the universal ribosomal protein uS8 family. As to quaternary structure, part of the 30S ribosomal subunit. Contacts proteins S5 and S12.

In terms of biological role, one of the primary rRNA binding proteins, it binds directly to 16S rRNA central domain where it helps coordinate assembly of the platform of the 30S subunit. The polypeptide is Small ribosomal subunit protein uS8 (Xylella fastidiosa (strain 9a5c)).